A 643-amino-acid chain; its full sequence is 1-deoxy-D-xylulose-5-phosphate synthase (643 aa).

Residues His89 and 130-132 (GHS) contribute to the thiamine diphosphate site. Asp161 serves as a coordination point for Mg(2+). Thiamine diphosphate contacts are provided by residues 162 to 163 (GA), Asn190, Phe297, and Glu380. Asn190 lines the Mg(2+) pocket.

This sequence belongs to the transketolase family. DXPS subfamily. As to quaternary structure, homodimer. It depends on Mg(2+) as a cofactor. Requires thiamine diphosphate as cofactor.

It catalyses the reaction D-glyceraldehyde 3-phosphate + pyruvate + H(+) = 1-deoxy-D-xylulose 5-phosphate + CO2. Its pathway is metabolic intermediate biosynthesis; 1-deoxy-D-xylulose 5-phosphate biosynthesis; 1-deoxy-D-xylulose 5-phosphate from D-glyceraldehyde 3-phosphate and pyruvate: step 1/1. Functionally, catalyzes the acyloin condensation reaction between C atoms 2 and 3 of pyruvate and glyceraldehyde 3-phosphate to yield 1-deoxy-D-xylulose-5-phosphate (DXP). In Hahella chejuensis (strain KCTC 2396), this protein is 1-deoxy-D-xylulose-5-phosphate synthase.